The following is a 680-amino-acid chain: Penicillin-binding protein 2B (680 aa).

Residues 1–8 (MRKFNSHS) lie on the Cytoplasmic side of the membrane. A helical membrane pass occupies residues 9 to 29 (IPIRLNLLFSIVILLFMTIIG). The Extracellular segment spans residues 30 to 680 (RLLYMQVLNK…NLYQKYHPMN (651 aa)). The active-site Acyl-ester intermediate is the Ser-386.

Belongs to the transpeptidase family. Interacts with MreC in the elongasome.

Its subcellular location is the cell membrane. A transpeptidase that forms peptide cross-links between adjacent glycan strands in cell wall peptidoglycan (PG). Part of the elongasome machinery that synthesizes peripheral PG. The protein is Penicillin-binding protein 2B of Streptococcus pneumoniae serotype 2 (strain D39 / NCTC 7466).